Consider the following 215-residue polypeptide: Oligoribonuclease (215 aa).

Residues leucine 5–leucine 170 form the Exonuclease domain. Tyrosine 127 is a catalytic residue. The segment at leucine 196–glycine 215 is disordered. Low complexity predominate over residues alanine 202–glycine 215.

This sequence belongs to the oligoribonuclease family.

It localises to the cytoplasm. Its function is as follows. 3'-to-5' exoribonuclease specific for small oligoribonucleotides. The sequence is that of Oligoribonuclease from Mycolicibacterium paratuberculosis (strain ATCC BAA-968 / K-10) (Mycobacterium paratuberculosis).